We begin with the raw amino-acid sequence, 239 residues long: Transcriptional regulatory protein RstA (239 aa).

Positions 3 to 116 (TIVFVEDDAE…VLLARLRLHL (114 aa)) constitute a Response regulatory domain. The residue at position 52 (Asp-52) is a 4-aspartylphosphate. Residues 136-235 (YKALHFGTLT…VRNKGYLFAP (100 aa)) constitute a DNA-binding region (ompR/PhoB-type).

Post-translationally, phosphorylated by RstB.

It is found in the cytoplasm. Member of the two-component regulatory system RstB/RstA. This is Transcriptional regulatory protein RstA (rstA) from Escherichia coli (strain K12).